Here is a 284-residue protein sequence, read N- to C-terminus: RNase adapter protein RapZ (284 aa).

8–15 serves as a coordination point for ATP; the sequence is GRSGSGKS. 56–59 contacts GTP; the sequence is DVRN. Residues 266–284 form an RNA-binding region; sequence RSRGKNAQSRHRTLEKSKS.

This sequence belongs to the RapZ-like family. RapZ subfamily. Homotrimer.

In terms of biological role, modulates the synthesis of GlmS, by affecting the processing and stability of the regulatory small RNA GlmZ. When glucosamine-6-phosphate (GlcN6P) concentrations are high in the cell, RapZ binds GlmZ and targets it to cleavage by RNase E. Consequently, GlmZ is inactivated and unable to activate GlmS synthesis. Under low GlcN6P concentrations, RapZ is sequestered and inactivated by an other regulatory small RNA, GlmY, preventing GlmZ degradation and leading to synthesis of GlmS. This is RNase adapter protein RapZ from Sodalis glossinidius (strain morsitans).